A 612-amino-acid chain; its full sequence is Coagulation factor X-activating enzyme heavy chain (612 aa).

Residues 1 to 20 (MMQVLLVTISLAVFPYQGSS) form the signal peptide. The propeptide at 21–193 (IILESGNVND…KKASQLVATS (173 aa)) is or 194. The Peptidase M12B domain maps to 201 to 395 (TFIELVIVVD…YKPKCILNPP (195 aa)). Glu204 provides a ligand contact to Ca(2+). N-linked (GlcNAc...) asparagine glycosylation is present at Asn259. A Ca(2+)-binding site is contributed by Asp286. Intrachain disulfides connect Cys310/Cys390, Cys350/Cys374, and Cys352/Cys357. His335 lines the Zn(2+) pocket. Residue Glu336 is part of the active site. The Zn(2+) site is built by His339 and His345. N-linked (GlcNAc...) asparagine glycans are attached at residues Asn353 and Asn373. Cys390, Asn393, Ile405, Asn408, Glu412, Glu415, and Asp418 together coordinate Ca(2+). The Disintegrin domain occupies 403–489 (PPICGNEIWE…ECPADGFHAN (87 aa)). The cysteines at positions 461 and 481 are disulfide-linked. A D/ECD-tripeptide motif is present at residues 467 to 469 (ECD).

Belongs to the venom metalloproteinase (M12B) family. P-III subfamily. P-IIId sub-subfamily. In terms of assembly, heterotrimer; disulfide-linked. The heterotrimer consists of 1 heavy chain and 2 light chains (lectins): LC1 and LC2 (AC Q7T045 and AC Q696W1). The cofactor is Zn(2+). N-glycosylated. Contains 8.0% of hexoses, 2.5% of hexosamines and 2.5% of sialic acids. In terms of tissue distribution, expressed by the venom gland.

Its subcellular location is the secreted. The catalysed reaction is Specifically activates several components of the blood clotting system, including coagulation factor X, coagulation factor IX and protein C by cleavage of Arg-|-Xaa bonds. Has no action on insulin B chain.. Its activity is regulated as follows. Calcium is required for the activity of the heterotrimer. Functionally, catalytic subunit of blood coagulation factor X-activating enzyme. Activates coagulation factor X (F10) by cleaving the Arg(234)-Ile(235) bond, activates coagulation factor IX (F9) by cleaving the Arg(226)-Val(227) bond and is also able to activate protein C (PROC). The sequence is that of Coagulation factor X-activating enzyme heavy chain from Macrovipera lebetinus (Levantine viper).